Here is a 463-residue protein sequence, read N- to C-terminus: Mitochondrial dynamics protein MID51 (463 aa).

The Mitochondrial intermembrane portion of the chain corresponds to 1 to 23 (MAGAGERKGKKDDNGIGTAIDFV). A helical membrane pass occupies residues 24–46 (LSNARLVLGVGGAAMLGIATLAV). Residues 47–463 (KRMYDRAISA…LSEPEVLLQT (417 aa)) lie on the Cytoplasmic side of the membrane. The interval 49–195 (MYDRAISAPT…LSGSLYDDLQ (147 aa)) is dimerization. 4 positions are modified to phosphoserine: Ser55, Ser59, Ser79, and Ser94. Residues 57-79 (PTSPTRLSHSGKRSWEEPNWMGS) form a disordered region. The tract at residues 104 to 123 (AFDTDTFCPPRPKPVARKGQ) is disordered. An important for interaction with DNM1L region spans residues 160–169 (AAVDICAELR). 3 residues coordinate ADP: Ser187, Ser189, and His201. The interval 234 to 243 (RRENPEYFPR) is important for interaction with DNM1L. ADP is bound by residues Ser340, Arg342, and Lys368.

This sequence belongs to the MID49/MID51 family. As to quaternary structure, homodimer. Interacts with DNM1L.

The protein localises to the mitochondrion outer membrane. In terms of biological role, mitochondrial outer membrane protein which regulates mitochondrial fission/fusion dynamics. Promotes the recruitment and association of the fission mediator dynamin-related protein 1 (DNM1L) to the mitochondrial surface independently of the mitochondrial fission FIS1 and MFF proteins. Regulates DNM1L GTPase activity and DNM1L oligomerization. Binds ADP and can also bind GDP, although with lower affinity. Does not bind CDP, UDP, ATP, AMP or GTP. Inhibits DNM1L GTPase activity in the absence of bound ADP. Requires ADP to stimulate DNM1L GTPase activity and the assembly of DNM1L into long, oligomeric tubules with a spiral pattern, as opposed to the ring-like DNM1L oligomers observed in the absence of bound ADP. Does not require ADP for its function in recruiting DNM1L. The protein is Mitochondrial dynamics protein MID51 (MIEF1) of Pongo abelii (Sumatran orangutan).